The chain runs to 167 residues: Transcriptional regulator MraZ (167 aa).

SpoVT-AbrB domains follow at residues 8–51 and 92–135; these read ESNH…YGDH and SFPT…NPAT.

The protein belongs to the MraZ family. In terms of assembly, forms oligomers.

It is found in the cytoplasm. It localises to the nucleoid. This chain is Transcriptional regulator MraZ, found in Ruegeria pomeroyi (strain ATCC 700808 / DSM 15171 / DSS-3) (Silicibacter pomeroyi).